A 66-amino-acid chain; its full sequence is Large ribosomal subunit protein bL31 (66 aa).

Residues Cys16, Cys18, Cys36, and Cys39 each contribute to the Zn(2+) site.

It belongs to the bacterial ribosomal protein bL31 family. Type A subfamily. As to quaternary structure, part of the 50S ribosomal subunit. Zn(2+) is required as a cofactor.

Functionally, binds the 23S rRNA. This is Large ribosomal subunit protein bL31 from Campylobacter curvus (strain 525.92).